The primary structure comprises 107 residues: Wound-induced proteinase inhibitor 1 (107 aa).

An N-terminal signal peptide occupies residues 1 to 23 (MESKFAHIIVFFLLATSFETLLA). Residues 24–36 (RKESDGPEVIELQ) constitute a propeptide that is removed on maturation.

It belongs to the protease inhibitor I13 (potato type I serine protease inhibitor) family. As to quaternary structure, heterogeneous tetramers of similar chains.

In terms of biological role, inhibits both chymotrypsin and trypsin. The chain is Wound-induced proteinase inhibitor 1 from Solanum tuberosum (Potato).